Reading from the N-terminus, the 99-residue chain is Putative membrane protein insertion efficiency factor (99 aa).

Belongs to the UPF0161 family.

The protein resides in the cell inner membrane. Could be involved in insertion of integral membrane proteins into the membrane. This is Putative membrane protein insertion efficiency factor from Salinibacter ruber (strain DSM 13855 / M31).